The following is a 56-amino-acid chain: Zinc finger mu-protein HVO_0758 (56 aa).

Zn(2+) contacts are provided by C23, C26, C45, and C48. 2 short sequence motifs (c(P)XCG motif) span residues 23-27 (CSECG) and 45-49 (CADCG).

In terms of assembly, monomer.

In terms of biological role, zinc-binding protein that binds one zinc ion. Is involved in biofilm formation, swarming and glycerol metabolism regulation. In Haloferax volcanii (strain ATCC 29605 / DSM 3757 / JCM 8879 / NBRC 14742 / NCIMB 2012 / VKM B-1768 / DS2) (Halobacterium volcanii), this protein is Zinc finger mu-protein HVO_0758.